Here is a 483-residue protein sequence, read N- to C-terminus: Cysteine proteinase 1, mitochondrial (483 aa).

Residues 1-30 constitute a mitochondrion transit peptide; that stretch reads MLPTSVSWSLYLKTFRSHLLRAPQIVLKRM. Residues Cys-102, His-398, and Asn-421 contribute to the active site. A propeptide (removed in mature form; by autocatalysis) is located at residue Lys-483.

The protein belongs to the peptidase C1 family. As to quaternary structure, homohexamer. Binds to nucleic acids. Binds single-stranded DNA and RNA with higher affinity than double-stranded DNA. Post-translationally, the N-terminus of isoform Cytoplasmic is blocked.

The protein resides in the mitochondrion. The protein localises to the cytoplasm. It catalyses the reaction Inactivates bleomycin B2 (a cytotoxic glycometallopeptide) by hydrolysis of a carboxyamide bond of beta-aminoalanine, but also shows general aminopeptidase activity. The specificity varies somewhat with source, but amino acid arylamides of Met, Leu and Ala are preferred.. Its activity is regulated as follows. Inhibited by E64, a specific inhibitor of cysteine proteases, N-ethylmaleimide, iodacetamide, and mercury and zinc ions. Functionally, the normal physiological role of the enzyme is unknown, but it is not essential for the viability of yeast cells. Has aminopeptidase activity, shortening substrate peptides sequentially by 1 amino acid. Has bleomycin hydrolase activity, which can protect the cell from the toxic effects of bleomycin. Has homocysteine-thiolactonase activity, protecting the cell against homocysteine toxicity. Acts as a repressor in the GAL4 regulatory system, but this does not require either the peptidase or nucleic acid-binding activities. The chain is Cysteine proteinase 1, mitochondrial (LAP3) from Saccharomyces cerevisiae (strain YJM789) (Baker's yeast).